The sequence spans 101 residues: Secreted enzymes activator (101 aa).

The segment covering 1–10 (MSRRRRRASA) has biased composition (basic residues). 2 disordered regions span residues 1 to 26 (MSRR…PYGS) and 45 to 101 (TRLA…NGRG). The span at 45 to 60 (TRLAASSRASRAAVGS) shows a compositional bias: low complexity. Positions 55 to 74 (RAAVGSFDGAKNRPASSRRQ) form a DNA-binding region, H-T-H motif.

Its function is as follows. Increases the production of several extracellular enzymes, like alkaline phosphatase, amylase, protease or lipase. When present in high concentrations, delays the production of pigments and sporulation. In Streptomyces griseus, this protein is Secreted enzymes activator (saf).